Here is a 106-residue protein sequence, read N- to C-terminus: Small ribosomal subunit protein uS10 (106 aa).

It belongs to the universal ribosomal protein uS10 family. In terms of assembly, part of the 30S ribosomal subunit.

In terms of biological role, involved in the binding of tRNA to the ribosomes. The sequence is that of Small ribosomal subunit protein uS10 from Pyrobaculum neutrophilum (strain DSM 2338 / JCM 9278 / NBRC 100436 / V24Sta) (Thermoproteus neutrophilus).